Reading from the N-terminus, the 198-residue chain is UPF0301 protein Tfu_2389 (198 aa).

This sequence belongs to the UPF0301 (AlgH) family.

The polypeptide is UPF0301 protein Tfu_2389 (Thermobifida fusca (strain YX)).